The chain runs to 563 residues: Delta-1-pyrroline-5-carboxylate dehydrogenase, mitochondrial (563 aa).

A mitochondrion-targeting transit peptide spans 1-23; the sequence is MLPPALLRRSLLSYAWRGSGLRW. Lys30 is subject to N6-succinyllysine. Phosphoserine is present on Ser43. N6-acetyllysine is present on Lys51. Residues Lys92, Lys98, Lys113, Lys129, and Lys174 each carry the N6-acetyllysine; alternate modification. 5 positions are modified to N6-succinyllysine; alternate: Lys92, Lys98, Lys113, Lys129, and Lys174. NAD(+) is bound by residues Ser207, Lys232, and 285 to 289; that span reads GSVPT. The Proton acceptor role is filled by Glu313. The residue at position 317 (Lys317) is an N6-acetyllysine. Position 346 is an N6-succinyllysine (Lys346). Catalysis depends on Cys347, which acts as the Nucleophile. N6-acetyllysine is present on residues Lys364 and Lys375. N6-succinyllysine is present on Lys394. Glu446 contributes to the NAD(+) binding site. Residue Lys461 is modified to N6-acetyllysine. Lys508 carries the post-translational modification N6-acetyllysine; alternate. At Lys508 the chain carries N6-succinyllysine; alternate. Ser512 lines the substrate pocket.

It belongs to the aldehyde dehydrogenase family. Homodimer.

The protein resides in the mitochondrion matrix. It carries out the reaction L-glutamate 5-semialdehyde + NAD(+) + H2O = L-glutamate + NADH + 2 H(+). It participates in amino-acid degradation; L-proline degradation into L-glutamate; L-glutamate from L-proline: step 2/2. In terms of biological role, irreversible conversion of delta-1-pyrroline-5-carboxylate (P5C), derived either from proline or ornithine, to glutamate. This is a necessary step in the pathway interconnecting the urea and tricarboxylic acid cycles. The preferred substrate is glutamic gamma-semialdehyde, other substrates include succinic, glutaric and adipic semialdehydes. The chain is Delta-1-pyrroline-5-carboxylate dehydrogenase, mitochondrial (Aldh4a1) from Rattus norvegicus (Rat).